A 284-amino-acid chain; its full sequence is Ribose-phosphate pyrophosphokinase 1 (284 aa).

34-36 (DGE) serves as a coordination point for ATP. Mg(2+)-binding residues include His-126 and Asp-163. Residue Lys-186 is part of the active site. D-ribose 5-phosphate is bound by residues Arg-188, Asp-211, and 215–219 (STGGT).

It belongs to the ribose-phosphate pyrophosphokinase family. Class III (archaeal) subfamily. Mg(2+) serves as cofactor.

The protein resides in the cytoplasm. The enzyme catalyses D-ribose 5-phosphate + ATP = 5-phospho-alpha-D-ribose 1-diphosphate + AMP + H(+). It participates in metabolic intermediate biosynthesis; 5-phospho-alpha-D-ribose 1-diphosphate biosynthesis; 5-phospho-alpha-D-ribose 1-diphosphate from D-ribose 5-phosphate (route I): step 1/1. Its function is as follows. Involved in the biosynthesis of the central metabolite phospho-alpha-D-ribosyl-1-pyrophosphate (PRPP) via the transfer of pyrophosphoryl group from ATP to 1-hydroxyl of ribose-5-phosphate (Rib-5-P). This chain is Ribose-phosphate pyrophosphokinase 1, found in Archaeoglobus fulgidus (strain ATCC 49558 / DSM 4304 / JCM 9628 / NBRC 100126 / VC-16).